The sequence spans 498 residues: ADP,ATP carrier protein 1 (498 aa).

Over 1 to 33 (MSTSKSENYLSELRKIIWPIEQHENKKFLPLAF) the chain is Cytoplasmic. A helical transmembrane segment spans residues 34-54 (MMFCILLNYSTLRSIKDGFVV). Cys37 and Cys85 form a disulfide bridge. At 55–67 (TDIGTESISFLKT) the chain is on the extracellular side. Residues 68-88 (YIVLPSAVIAMVIYVKLCDIL) form a helical membrane-spanning segment. The Cytoplasmic segment spans residues 89–92 (KQEN). A helical transmembrane segment spans residues 93–113 (IFYVITSFFLGYFALFAFVLY). The Extracellular segment spans residues 114–147 (PYPDLVHPDHKTIESLSLAYPNFKWFIKIVGKWS). A helical transmembrane segment spans residues 148–168 (FASFYTIAELWGTMMLSLLFW). Residues 169 to 184 (QFANQITKITEAKRFY) lie on the Cytoplasmic side of the membrane. A helical transmembrane segment spans residues 185 to 205 (SMFGLLANLALPVTSVVIGYF). At 206–218 (LHEKTQIVSEHLK) the chain is on the extracellular side. Residues 219-239 (FIPLFVIMITSSFLIILTYRW) traverse the membrane as a helical segment. Topologically, residues 240 to 279 (MNKNVLTDPRLYDPTLVKEKKAKAKLSFIESFKMIFTSKY) are cytoplasmic. A helical membrane pass occupies residues 280–300 (VGYIALLIIAYGVSVNLVEGV). Over 301 to 320 (WKSKVKELYPTKEAYTIYMG) the chain is Extracellular. Residues 321–341 (QFQFYQGWVAIAFMLIGSNIL) form a helical membrane-spanning segment. The Cytoplasmic segment spans residues 342–348 (RKVSWLT). The chain crosses the membrane as a helical span at residues 349-369 (AAMITPLMMFITGAAFFSFIF). Residues 370–379 (FDSVIAMNLT) lie on the Extracellular side of the membrane. A helical membrane pass occupies residues 380 to 400 (GILASSPLTLAVMFGMIQNVL). Topologically, residues 401–438 (SKGVKYSLFDATKNMAYIPLDKDLRVKGQAAVEVIGGR) are cytoplasmic. Residue 436-442 (GGRLGKS) coordinates ATP. A helical transmembrane segment spans residues 439–459 (LGKSGGAIIQSTFFILFPAFG). The Extracellular segment spans residues 460-465 (FIEATP). A helical transmembrane segment spans residues 466-486 (YFASIFFIIVILWIFAVKGLN). Topologically, residues 487–498 (KEYQVLVNKNEN) are cytoplasmic.

Belongs to the ADP/ATP translocase tlc family.

The protein localises to the cell membrane. In terms of biological role, provides the rickettsial cell with host ATP in exchange for rickettsial ADP. This is an obligate exchange system. This energy acquiring activity is an important component of rickettsial parasitism. The sequence is that of ADP,ATP carrier protein 1 (tlcA) from Rickettsia typhi (strain ATCC VR-144 / Wilmington).